The sequence spans 357 residues: Membrane-bound lytic murein transglycosylase C (357 aa).

The N-terminal stretch at 1–15 (MKKYLLLALLPFLYA) is a signal peptide. C16 carries N-palmitoyl cysteine lipidation. C16 carries S-diacylglycerol cysteine lipidation.

This sequence belongs to the transglycosylase Slt family.

The protein resides in the cell outer membrane. It carries out the reaction Exolytic cleavage of the (1-&gt;4)-beta-glycosidic linkage between N-acetylmuramic acid (MurNAc) and N-acetylglucosamine (GlcNAc) residues in peptidoglycan, from either the reducing or the non-reducing ends of the peptidoglycan chains, with concomitant formation of a 1,6-anhydrobond in the MurNAc residue.. Its function is as follows. Murein-degrading enzyme. May play a role in recycling of muropeptides during cell elongation and/or cell division. The polypeptide is Membrane-bound lytic murein transglycosylase C (Haemophilus influenzae (strain PittGG)).